A 151-amino-acid polypeptide reads, in one-letter code: Deoxyuridine 5'-triphosphate nucleotidohydrolase (151 aa).

Residues 70–72, Asn83, 87–89, and Met97 contribute to the substrate site; these read RSG and LID.

This sequence belongs to the dUTPase family. As to quaternary structure, homotrimer. The cofactor is Mg(2+).

It carries out the reaction dUTP + H2O = dUMP + diphosphate + H(+). It functions in the pathway pyrimidine metabolism; dUMP biosynthesis; dUMP from dCTP (dUTP route): step 2/2. Its function is as follows. This enzyme is involved in nucleotide metabolism: it produces dUMP, the immediate precursor of thymidine nucleotides and it decreases the intracellular concentration of dUTP so that uracil cannot be incorporated into DNA. The polypeptide is Deoxyuridine 5'-triphosphate nucleotidohydrolase (Escherichia coli O7:K1 (strain IAI39 / ExPEC)).